A 236-amino-acid chain; its full sequence is 2,3,4,5-tetrahydropyridine-2,6-dicarboxylate N-acetyltransferase (236 aa).

It belongs to the transferase hexapeptide repeat family. DapH subfamily.

The enzyme catalyses (S)-2,3,4,5-tetrahydrodipicolinate + acetyl-CoA + H2O = L-2-acetamido-6-oxoheptanedioate + CoA. Its pathway is amino-acid biosynthesis; L-lysine biosynthesis via DAP pathway; LL-2,6-diaminopimelate from (S)-tetrahydrodipicolinate (acetylase route): step 1/3. Its function is as follows. Catalyzes the transfer of an acetyl group from acetyl-CoA to tetrahydrodipicolinate. The sequence is that of 2,3,4,5-tetrahydropyridine-2,6-dicarboxylate N-acetyltransferase from Clostridium beijerinckii (strain ATCC 51743 / NCIMB 8052) (Clostridium acetobutylicum).